A 932-amino-acid polypeptide reads, in one-letter code: DNA mismatch repair protein MutS (932 aa).

Residue 620-627 (GPNMAGKS) participates in ATP binding.

It belongs to the DNA mismatch repair MutS family.

Its function is as follows. This protein is involved in the repair of mismatches in DNA. It is possible that it carries out the mismatch recognition step. This protein has a weak ATPase activity. This chain is DNA mismatch repair protein MutS, found in Lachnoclostridium phytofermentans (strain ATCC 700394 / DSM 18823 / ISDg) (Clostridium phytofermentans).